The primary structure comprises 153 residues: Ribosome maturation factor RimP (153 aa).

The protein belongs to the RimP family.

It localises to the cytoplasm. Required for maturation of 30S ribosomal subunits. The sequence is that of Ribosome maturation factor RimP from Burkholderia mallei (strain NCTC 10229).